The primary structure comprises 761 residues: Proton-coupled zinc antiporter SLC30A5 (761 aa).

An N-acetylmethionine modification is found at M1. The Cytoplasmic segment spans residues 1–29 (MEEKYGGDARPGPGGGLGPVDVPSARLTR). A helical transmembrane segment spans residues 30-46 (YILLLCLTKCLKAVGLF). At 47 to 54 (ESYDLLKA) the chain is on the lumenal side. Residues 55-75 (VHIVQFIFILKLGTAFFMVLF) form a helical membrane-spanning segment. Residues 76–96 (QKPFSSGKPITKHQWIKIFKH) are Cytoplasmic-facing. A helical transmembrane segment spans residues 97–117 (AVAGCIISLLWFFGLTLCGPL). Residue R118 is a topological domain, lumenal. A helical transmembrane segment spans residues 119-139 (TLLLFEHSDIVVISLLSVLFT). Residues 140–150 (SSGGGPAKTRG) lie on the Cytoplasmic side of the membrane. Residues 151-171 (AAFFIIAVICLLLFDNDDLMA) form a helical membrane-spanning segment. At 172–191 (KMAEHPEGHHDSALTHMLYT) the chain is on the lumenal side. Residues 192–212 (AIAFLGVADHKGGVLLLVLAL) form a helical membrane-spanning segment. The Cytoplasmic portion of the chain corresponds to 213–236 (CCKVGFHTASRKLSIDVGGAKRLQ). Residues 237–257 (ALSQLVSVFLLCPWVIVLSVT) traverse the membrane as a helical segment. At 258-264 (TESKVES) the chain is on the lumenal side. Residues 265-285 (WFSLIMPFTTVIFFVMILDFY) traverse the membrane as a helical segment. The Cytoplasmic segment spans residues 286 to 301 (MDSVCSVKMDVSKCAR). A helical membrane pass occupies residues 302–322 (YGSFPIFISALLFGNFWTHPI). At 323 to 340 (TDQLRAMNRAAHQESTEH) the chain is on the lumenal side. A helical membrane pass occupies residues 341 to 361 (VLSGGVVVSAVFFILSANILS). The Cytoplasmic portion of the chain corresponds to 362-416 (SPSKRGQKGTLIGYSPEGTPLYHFMGDAFQHSSQSVPRFIKDSLKQVLEESDSRQ). Residues 417–437 (IFYFLCLNLLFTFVELFYGVL) traverse the membrane as a helical segment. The mediates homodimerization with SLC30A6 stretch occupies residues 418 to 636 (FYFLCLNLLF…VLIFLSVIPL (219 aa)). Over 438–446 (TNSLGLISD) the chain is Lumenal. The helical transmembrane segment at 447-467 (GFHMLFDCSALVMGLFAALMS) threads the bilayer. Residues H449 and D453 each contribute to the Zn(2+) site. Residues 468–481 (RWKATRIFSYGYGR) are Cytoplasmic-facing. A helical transmembrane segment spans residues 482–502 (IEILSGFINGLFLIVIAFFVF). The Lumenal portion of the chain corresponds to 503–518 (MESVARLIDPPELDTN). The helical transmembrane segment at 519–539 (MLTPVSVGGLIVNLIGICAFS) threads the bilayer. The tract at residues 540–574 (HAHSHGHGASQGNCHSDHGHSHHAHGHGHDHGHSH) is his-rich loop; required for zinc transport. The Cytoplasmic segment spans residues 540-588 (HAHSHGHGASQGNCHSDHGHSHHAHGHGHDHGHSHGFTGGGMNANMRGV). The disordered stretch occupies residues 549 to 576 (SQGNCHSDHGHSHHAHGHGHDHGHSHGF). The helical transmembrane segment at 589–609 (FLHVLADTLGSIGVIVSTVLI) threads the bilayer. Zn(2+) contacts are provided by H591 and D595. The Lumenal portion of the chain corresponds to 610–613 (EQFG). The helical transmembrane segment at 614–634 (WFIADPLCSLFIAVLIFLSVI) threads the bilayer. Over 635 to 761 (PLIKDACQVL…KYCKDGTYIM (127 aa)) the chain is Cytoplasmic.

This sequence belongs to the cation diffusion facilitator (CDF) transporter (TC 2.A.4) family. SLC30A subfamily. In terms of assembly, heterodimer with SLC30A6/ZNT6; form a functional zinc ion transmembrane transporter. Could homodimerize through the formation of dityrosine bonds upon oxidative stress. As to expression, ubiquitously expressed.

Its subcellular location is the golgi apparatus. It is found in the golgi stack membrane. The protein resides in the cytoplasmic vesicle. It localises to the COPII-coated vesicle membrane. The protein localises to the secretory vesicle membrane. Its subcellular location is the trans-Golgi network membrane. It carries out the reaction Zn(2+)(in) + 2 H(+)(out) = Zn(2+)(out) + 2 H(+)(in). Functionally, together with SLC30A6 forms a functional proton-coupled zinc ion antiporter mediating zinc entry into the lumen of organelles along the secretory pathway. By contributing to zinc ion homeostasis within the early secretory pathway, regulates the activation and folding of enzymes like alkaline phosphatases and enzymes involved in phosphatidylinositol glycan anchor biosynthesis. Through the transport of zinc into secretory granules of pancreatic beta-cells, plays an important role in the storage and secretion of insulin. In Mus musculus (Mouse), this protein is Proton-coupled zinc antiporter SLC30A5.